The chain runs to 510 residues: ATP synthase subunit alpha (510 aa).

169–176 contributes to the ATP binding site; sequence GDRQTGKT.

The protein belongs to the ATPase alpha/beta chains family. F-type ATPases have 2 components, CF(1) - the catalytic core - and CF(0) - the membrane proton channel. CF(1) has five subunits: alpha(3), beta(3), gamma(1), delta(1), epsilon(1). CF(0) has three main subunits: a(1), b(2) and c(9-12). The alpha and beta chains form an alternating ring which encloses part of the gamma chain. CF(1) is attached to CF(0) by a central stalk formed by the gamma and epsilon chains, while a peripheral stalk is formed by the delta and b chains.

Its subcellular location is the cell inner membrane. The catalysed reaction is ATP + H2O + 4 H(+)(in) = ADP + phosphate + 5 H(+)(out). Its function is as follows. Produces ATP from ADP in the presence of a proton gradient across the membrane. The alpha chain is a regulatory subunit. This chain is ATP synthase subunit alpha, found in Rickettsia peacockii (strain Rustic).